The primary structure comprises 808 residues: MKLSLDWMNDFTPLKEVGLDAILKKIAISVCEIDDATEFRPELDFVKIVRIESLEKHPSADKLQIVQVFDGSSKSQIVTGATNVKIGDLVPLAIPGAKLGDKEILESELRGVKSSGMLCSEKELFLSEEGNGVWILNGLDQAEVGKTIRSFLYYDDIIFEVDNKSITHRPDLWSHFGFARELASQLRLPIVFNPFESLWNFDLSVKLPKVLENQNAHSYYASSISGVSVFPSKRKFQSRLQKCGVRVINNVVDVSNYVMLEMGQPTHFFDKKFLENQGEISLEVSFAKKGESFALLDETSPALEEEVLLIRNQGKPVAIAGVMGGKESAVQNTTTEIVMESAVFMRERIRKSIRSTGIRSDSSVRYEKGLEATTTLPVIRRALNLLKENGCSELKASEPVGFLHIPHKEVRIHTDIHFINAKLGVTLSQGDITDILERLHFIVSWKGEHLEVLVPKFRHNYDVTIPEDLVEEIGRTKGYDTIQVSPLLAEVKTPIRNLNRELERKCKTFFAIALKYHEVFNYSFQSYKENEFSGDPKLSVKIKNEMPEEQSVLRNSLLPSLLKNTRTNQDRFSEIKIFEFGRVYFNLPEPENEKKIFAFAVSLDKKSSEPDLKLLEEDFLKIKKEVESFLESIQIYEYTWKIQQETIFHPGANLCLVARSGKDGLETIVGNLGYVHPAILDSFELKKRVIYGSFEFERIVELWNQNRKVSRFVTPSQFPEAEIDLSILVGEKENTNVFTDLVKLERIPELKEGWVYSQFMGGNVPEGKKSVSYRFRLVNYERTFTQERIKEISDQLVILAGKNGFVLR.

In terms of domain architecture, tRNA-binding spans 40-149 (RPELDFVKIV…DQAEVGKTIR (110 aa)). A B5 domain is found at 407–484 (HKEVRIHTDI…RTKGYDTIQV (78 aa)). Residues Asp462, Asp468, Glu471, and Glu472 each coordinate Mg(2+). One can recognise an FDX-ACB domain in the interval 716-808 (SQFPEAEIDL…LAGKNGFVLR (93 aa)).

It belongs to the phenylalanyl-tRNA synthetase beta subunit family. Type 1 subfamily. Tetramer of two alpha and two beta subunits. The cofactor is Mg(2+).

Its subcellular location is the cytoplasm. It catalyses the reaction tRNA(Phe) + L-phenylalanine + ATP = L-phenylalanyl-tRNA(Phe) + AMP + diphosphate + H(+). In Leptospira interrogans serogroup Icterohaemorrhagiae serovar Lai (strain 56601), this protein is Phenylalanine--tRNA ligase beta subunit.